The following is a 171-amino-acid chain: Co-chaperone protein HscB (171 aa).

Residues 2-74 enclose the J domain; it reads DYFTLFGLPA…LARAEYLLSL (73 aa).

This sequence belongs to the HscB family. As to quaternary structure, interacts with HscA and stimulates its ATPase activity. Interacts with IscU.

In terms of biological role, co-chaperone involved in the maturation of iron-sulfur cluster-containing proteins. Seems to help targeting proteins to be folded toward HscA. The sequence is that of Co-chaperone protein HscB from Enterobacter sp. (strain 638).